Reading from the N-terminus, the 395-residue chain is MESKRPRLLEEADKQKKTVRVGLNAPSMLRKNQLGFLRFANYCRIARELRVSCMQRKKVQIHSWDPSSLASDRFNRILANTNTDQLFTVNQVEAGGSKYGIITMRGLTTPELRVYPHKTLYVPNRKVNSMCWASLNHLDSHLLLCFVGLADTPSCAVLLPASLFIGSFPGMRRPGMLCSFQIPDAWSCAWSLSIHAYHSFSTGLSQQVLLTNVVTGHQQSFGTSSDVLAQQFAIMTPLLFNGCRSGEIFGIDLRCGNQGSGWKAICLSHDSAVTSLQILQDGQFLVSSDMTGTIKLWDLRATKCVTQYEGHVNNSAYLPVHVNEEEGVVAAVGQDCYTRIWSLRHGHLLTTIPSPYPASENDIPSVAFSSRLGGFRGAPGLLMAVREDLYCFSYG.

WD repeat units lie at residues 268–307 and 312–351; these read SHDS…CVTQ and VNNS…LLTT.

The protein is DDB1- and CUL4-associated factor 4-like protein 2 (DCAF4L2) of Homo sapiens (Human).